The chain runs to 165 residues: Small ribosomal subunit protein uS5 (165 aa).

The region spanning 10-73 (LNEKLIAVNR…EKARRNMVTV (64 aa)) is the S5 DRBM domain.

It belongs to the universal ribosomal protein uS5 family. In terms of assembly, part of the 30S ribosomal subunit. Contacts proteins S4 and S8.

With S4 and S12 plays an important role in translational accuracy. Its function is as follows. Located at the back of the 30S subunit body where it stabilizes the conformation of the head with respect to the body. This chain is Small ribosomal subunit protein uS5, found in Photobacterium profundum (strain SS9).